A 167-amino-acid polypeptide reads, in one-letter code: SsrA-binding protein (167 aa).

Residues 139–167 (QAHDKRHAEKEREWQRDKQRIMRAHNRNA) form a disordered region. Residues 144-158 (RHAEKEREWQRDKQR) are compositionally biased toward basic and acidic residues.

Belongs to the SmpB family.

It is found in the cytoplasm. Its function is as follows. Required for rescue of stalled ribosomes mediated by trans-translation. Binds to transfer-messenger RNA (tmRNA), required for stable association of tmRNA with ribosomes. tmRNA and SmpB together mimic tRNA shape, replacing the anticodon stem-loop with SmpB. tmRNA is encoded by the ssrA gene; the 2 termini fold to resemble tRNA(Ala) and it encodes a 'tag peptide', a short internal open reading frame. During trans-translation Ala-aminoacylated tmRNA acts like a tRNA, entering the A-site of stalled ribosomes, displacing the stalled mRNA. The ribosome then switches to translate the ORF on the tmRNA; the nascent peptide is terminated with the 'tag peptide' encoded by the tmRNA and targeted for degradation. The ribosome is freed to recommence translation, which seems to be the essential function of trans-translation. The protein is SsrA-binding protein of Xylella fastidiosa (strain M12).